We begin with the raw amino-acid sequence, 314 residues long: DNA-directed RNA polymerase subunit alpha (314 aa).

Residues 1-228 (MIEIEKPKIE…EHLSIFVNLT (228 aa)) are alpha N-terminal domain (alpha-NTD). Positions 245 to 314 (KEKVLEMTIE…DLGLSLRNEN (70 aa)) are alpha C-terminal domain (alpha-CTD).

Belongs to the RNA polymerase alpha chain family. Homodimer. The RNAP catalytic core consists of 2 alpha, 1 beta, 1 beta' and 1 omega subunit. When a sigma factor is associated with the core the holoenzyme is formed, which can initiate transcription.

It carries out the reaction RNA(n) + a ribonucleoside 5'-triphosphate = RNA(n+1) + diphosphate. DNA-dependent RNA polymerase catalyzes the transcription of DNA into RNA using the four ribonucleoside triphosphates as substrates. The sequence is that of DNA-directed RNA polymerase subunit alpha from Listeria innocua serovar 6a (strain ATCC BAA-680 / CLIP 11262).